Consider the following 303-residue polypeptide: Signal recognition particle receptor FtsY (303 aa).

Residues 108 to 115, 190 to 194, and 254 to 257 contribute to the GTP site; these read GVNGAGKT, DTAGR, and TKLD.

It belongs to the GTP-binding SRP family. FtsY subfamily. As to quaternary structure, part of the signal recognition particle protein translocation system, which is composed of SRP and FtsY. SRP is a ribonucleoprotein composed of Ffh and a 4.5S RNA molecule.

It localises to the cell inner membrane. Its subcellular location is the cytoplasm. It catalyses the reaction GTP + H2O = GDP + phosphate + H(+). Its function is as follows. Involved in targeting and insertion of nascent membrane proteins into the cytoplasmic membrane. Acts as a receptor for the complex formed by the signal recognition particle (SRP) and the ribosome-nascent chain (RNC). Interaction with SRP-RNC leads to the transfer of the RNC complex to the Sec translocase for insertion into the membrane, the hydrolysis of GTP by both Ffh and FtsY, and the dissociation of the SRP-FtsY complex into the individual components. The protein is Signal recognition particle receptor FtsY of Rickettsia conorii (strain ATCC VR-613 / Malish 7).